Here is a 63-residue protein sequence, read N- to C-terminus: Large ribosomal subunit protein uL29 (63 aa).

It belongs to the universal ribosomal protein uL29 family.

This Photobacterium profundum (strain SS9) protein is Large ribosomal subunit protein uL29.